The chain runs to 160 residues: Large ribosomal subunit protein uL16 (160 aa).

The segment covering 138–148 (KNLEVSSQENT) has biased composition (polar residues). Residues 138 to 160 (KNLEVSSQENTKNNKESQEEVKQ) are disordered. Positions 149–160 (KNNKESQEEVKQ) are enriched in basic and acidic residues.

This sequence belongs to the universal ribosomal protein uL16 family. In terms of assembly, part of the 50S ribosomal subunit.

Its function is as follows. Binds 23S rRNA and is also seen to make contacts with the A and possibly P site tRNAs. This is Large ribosomal subunit protein uL16 from Prochlorococcus marinus (strain MIT 9312).